We begin with the raw amino-acid sequence, 93 residues long: Alpha-defensin 23 (93 aa).

The first 19 residues, 1–19 (MKTLVLLSALILLAFQVQA), serve as a signal peptide directing secretion. The propeptide occupies 20–58 (DPIQNTDEETKTEEQPGKEDQAVSVSFGDPEGSSLQEES). Residues 24–54 (NTDEETKTEEQPGKEDQAVSVSFGDPEGSSL) are disordered. Basic and acidic residues predominate over residues 27–40 (EETKTEEQPGKEDQ). 3 cysteine pairs are disulfide-bonded: C64-C92, C66-C81, and C71-C91.

The protein belongs to the alpha-defensin family.

The protein localises to the secreted. Functionally, may have microbicidal activities. The protein is Alpha-defensin 23 (Defa23) of Mus musculus (Mouse).